The primary structure comprises 314 residues: Inosine-uridine preferring nucleoside hydrolase (314 aa).

Asp10 contacts Ca(2+). Asp14 is a substrate binding site. Residues Asp15 and Thr126 each coordinate Ca(2+). Substrate-binding residues include Asn160, Glu166, and Asn168. His240 (proton donor) is an active-site residue. Residue Asp241 coordinates Ca(2+).

It belongs to the IUNH family. As to quaternary structure, homotetramer. It depends on Ca(2+) as a cofactor.

The catalysed reaction is inosine + H2O = hypoxanthine + D-ribose. The enzyme catalyses uridine + H2O = D-ribose + uracil. It participates in purine metabolism; purine nucleoside salvage. Is potently inhibited by immucillin A and immucillin ACAP, which are transition state inhibitors. Functionally, catalyzes the hydrolysis of the N-glycosidic bond of all of the commonly occurring purine and pyrimidine nucleosides into ribose and the associated base, but has a preference for inosine and uridine as substrates. Likely functions in purine salvage from the host, a fundamental pathway since protozoan parasites such as L.major are incapable of de novo purine biosynthesis. This chain is Inosine-uridine preferring nucleoside hydrolase (NSNH), found in Leishmania major.